Consider the following 182-residue polypeptide: NADH-quinone oxidoreductase subunit C 2 (182 aa).

Positions 153–182 (YKDKLNPFGAEGPPPTQPDLATNDIPQGGR) are disordered.

The protein belongs to the complex I 30 kDa subunit family. In terms of assembly, NDH-1 is composed of 14 different subunits. Subunits NuoB, C, D, E, F, and G constitute the peripheral sector of the complex.

Its subcellular location is the cell inner membrane. It carries out the reaction a quinone + NADH + 5 H(+)(in) = a quinol + NAD(+) + 4 H(+)(out). Functionally, NDH-1 shuttles electrons from NADH, via FMN and iron-sulfur (Fe-S) centers, to quinones in the respiratory chain. The immediate electron acceptor for the enzyme in this species is believed to be ubiquinone. Couples the redox reaction to proton translocation (for every two electrons transferred, four hydrogen ions are translocated across the cytoplasmic membrane), and thus conserves the redox energy in a proton gradient. The sequence is that of NADH-quinone oxidoreductase subunit C 2 from Rhizobium meliloti (strain 1021) (Ensifer meliloti).